Consider the following 210-residue polypeptide: Glutathione S-transferase 4 (210 aa).

In terms of domain architecture, GST N-terminal spans Met1–Asp80. Glutathione-binding positions include Ser9, His50 to Ile52, and Glu64 to Arg66. The GST C-terminal domain maps to Cys87 to Ile208.

It belongs to the GST superfamily. Theta family. Homodimer.

It catalyses the reaction RX + glutathione = an S-substituted glutathione + a halide anion + H(+). Conjugation of reduced glutathione to a wide number of exogenous and endogenous hydrophobic electrophiles. The protein is Glutathione S-transferase 4 (Gst4) of Musca domestica (House fly).